A 1025-amino-acid polypeptide reads, in one-letter code: MKLLKPSWVSHNGKPIFSVDIHPDGTKFATGGQGEDSGKVMIWNMAPVLKEEDEKNENVPKMLCQMDNHLACVNCVRWSNNGLYLASGGDDKLVMVWKRAALIGPSTVFGSSNKLANVEQWRCVTILRNHTGDVMDVSWSPHDVWLASCSVDNTIVIWNARKFPEMVTCLRGHTGLVKGLTWDPVGKYIASQADDHSLRVWRTVDWQMEANITKPFSECGGTTHVLRLSWSPDGQYLVSAHAMNNSGPTAQIVERDGWRTNMDFVGHRKAVTVVKFNPKIFKKKQKNGGSPKPSCPYCCCAVGSKDRSLSVWLTSLKRPLVVIHDLFDKSIMDISWTLTGLGMLVCSMDGTVAYLDFSLDELGDPLSEEEKNSIHQNIYGKSLAITNTEPQLSTTIIENPEMLKYQQERRNSTQANSGPGATGSESATPKLNSVMNGESLEDIRKNLLKKQVETRTPDGRRRITPLCIAQLDTGDFSPALFNSAPILPSGSSMSNQLTSQLSSDSSPGQAPPLGLRPSQDPMLISPPPSSAAKVLEDNKDGVKSCLLLTSASKIEPMKALDSRFTERSKATPGATAAIASSTGLTPSERPKESTPMQKDVKSKEDTSSDSEDKMATINKNLAFNKRKPELLMDGAEVVEKRKKGRPRKDKMAASIAQPLTQTTSPAEREPSRAAAAGAGAAAPTAAAALKLPTPSIKKAFTLQVSMDPSVVLEVENEVSVVAGSRLSQLRCSRDGRDWNTLLPSSVLTAAGSSDVVAVASQDRMLSVFSSCGRRLLPAIQLATPASALHCSAHFVMVLTSGATLSVWDVHKQKALVKNESLLTILSGAAVTVSQSMLTQQGVPVVGLSNGKSYCFSLSLETWTLIADTADSLVQCADFRNCLPNQDAPMSSGPLAAMQGRNFNAGRLASRLSSTPHHLQQSMTLAFLENQLASALTLQSAQEYRYWLLIYARFLVNEGSEYRLRELCKELLGPVHKSATTSWEPTTLGLRKRDLLREVLPVVGENLRFQRLFTEYQDQLELLRNK.

WD repeat units lie at residues 11–53 (HNGK…KEED), 68–107 (NHLA…GPST), 129–168 (NHTG…EMVT), 172–211 (GHTG…MEAN), 220–263 (GGTT…TNMD), 266–322 (GHRK…PLVV), and 326–367 (LFDK…DPLS). Disordered stretches follow at residues 408 to 433 (ERRN…KLNS), 490 to 534 (GSSM…AAKV), 563 to 614 (RFTE…EDKM), and 634 to 678 (GAEV…AAGA). Polar residues-rich tracts occupy residues 412–433 (STQA…KLNS) and 490–508 (GSSM…SSPG). The segment covering 588 to 614 (ERPKESTPMQKDVKSKEDTSSDSEDKM) has biased composition (basic and acidic residues).

It belongs to the WD repeat HIR1 family.

The protein resides in the nucleus. Its function is as follows. Required for replication-independent chromatin assembly and for the periodic repression of histone gene transcription during the cell cycle. This Takifugu rubripes (Japanese pufferfish) protein is Protein HIRA (hira).